Reading from the N-terminus, the 235-residue chain is Endonuclease V (235 aa).

Mg(2+) contacts are provided by Asp47 and Asp115.

This sequence belongs to the endonuclease V family. Mg(2+) is required as a cofactor.

The protein resides in the cytoplasm. It catalyses the reaction Endonucleolytic cleavage at apurinic or apyrimidinic sites to products with a 5'-phosphate.. Its function is as follows. DNA repair enzyme involved in the repair of deaminated bases. Selectively cleaves double-stranded DNA at the second phosphodiester bond 3' to a deoxyinosine leaving behind the intact lesion on the nicked DNA. In Myxococcus xanthus (strain DK1622), this protein is Endonuclease V.